A 150-amino-acid chain; its full sequence is Anti-sigma F factor (150 aa).

It belongs to the anti-sigma-factor family.

The enzyme catalyses L-seryl-[protein] + ATP = O-phospho-L-seryl-[protein] + ADP + H(+). The catalysed reaction is L-threonyl-[protein] + ATP = O-phospho-L-threonyl-[protein] + ADP + H(+). Its function is as follows. Binds to sigma F and blocks its ability to form an RNA polymerase holoenzyme (E-sigma F). Phosphorylates SpoIIAA on a serine residue. This phosphorylation may enable SpoIIAA to act as an anti-anti-sigma factor that counteracts SpoIIAB and thus releases sigma F from inhibition. The sequence is that of Anti-sigma F factor from Pasteuria penetrans.